Consider the following 416-residue polypeptide: CinA-like protein (416 aa).

This sequence belongs to the CinA family.

The chain is CinA-like protein from Rippkaea orientalis (strain PCC 8801 / RF-1) (Cyanothece sp. (strain PCC 8801)).